Consider the following 448-residue polypeptide: L-seryl-tRNA(Sec) selenium transferase (448 aa).

Lys284 carries the post-translational modification N6-(pyridoxal phosphate)lysine.

It belongs to the SelA family. The cofactor is pyridoxal 5'-phosphate.

Its subcellular location is the cytoplasm. The enzyme catalyses L-seryl-tRNA(Sec) + selenophosphate + H(+) = L-selenocysteinyl-tRNA(Sec) + phosphate. It participates in aminoacyl-tRNA biosynthesis; selenocysteinyl-tRNA(Sec) biosynthesis; selenocysteinyl-tRNA(Sec) from L-seryl-tRNA(Sec) (bacterial route): step 1/1. Its function is as follows. Converts seryl-tRNA(Sec) to selenocysteinyl-tRNA(Sec) required for selenoprotein biosynthesis. The chain is L-seryl-tRNA(Sec) selenium transferase from Nautilia profundicola (strain ATCC BAA-1463 / DSM 18972 / AmH).